A 182-amino-acid chain; its full sequence is ATP-dependent protease subunit HslV (182 aa).

T6 is an active-site residue. Na(+)-binding residues include A164, C167, and T170.

Belongs to the peptidase T1B family. HslV subfamily. As to quaternary structure, a double ring-shaped homohexamer of HslV is capped on each side by a ring-shaped HslU homohexamer. The assembly of the HslU/HslV complex is dependent on binding of ATP.

The protein localises to the cytoplasm. It carries out the reaction ATP-dependent cleavage of peptide bonds with broad specificity.. With respect to regulation, allosterically activated by HslU binding. In terms of biological role, protease subunit of a proteasome-like degradation complex believed to be a general protein degrading machinery. The chain is ATP-dependent protease subunit HslV from Borrelia garinii subsp. bavariensis (strain ATCC BAA-2496 / DSM 23469 / PBi) (Borreliella bavariensis).